The sequence spans 190 residues: Large ribosomal subunit protein uL10 (190 aa).

The interval 170-190 (AAGAPAEAAPVEAPAAETVDA) is disordered.

Belongs to the universal ribosomal protein uL10 family. Part of the ribosomal stalk of the 50S ribosomal subunit. The N-terminus interacts with L11 and the large rRNA to form the base of the stalk. The C-terminus forms an elongated spine to which L12 dimers bind in a sequential fashion forming a multimeric L10(L12)X complex.

In terms of biological role, forms part of the ribosomal stalk, playing a central role in the interaction of the ribosome with GTP-bound translation factors. This Kineococcus radiotolerans (strain ATCC BAA-149 / DSM 14245 / SRS30216) protein is Large ribosomal subunit protein uL10.